A 518-amino-acid polypeptide reads, in one-letter code: Arrestin-related trafficking adapter 10 (518 aa).

Lys118 is covalently cross-linked (Glycyl lysine isopeptide (Lys-Gly) (interchain with G-Cter in ubiquitin)).

The protein belongs to the ART10 family. Interacts with RSP5. Post-translationally, ubiquitinated by RSP5.

The protein localises to the cytoplasm. In terms of biological role, may regulate endocytosis by recruiting RSP5 ubiquitin ligase activity to specific plasma membrane proteins in response to extracellular stimuli. This Saccharomyces cerevisiae (strain YJM789) (Baker's yeast) protein is Arrestin-related trafficking adapter 10 (ART10).